A 932-amino-acid chain; its full sequence is Chitin synthase regulatory factor 3 (932 aa).

The segment covering 1–16 (MKDSHSSRRKYEKEKL) has biased composition (basic and acidic residues). Disordered stretches follow at residues 1–53 (MKDS…PTSR), 264–356 (TLEE…LQQP), and 374–406 (EVPAPTFDRRNVSRNSNNNSPEGYDNNRTNPTV). 3 stretches are compositionally biased toward polar residues: residues 35 to 53 (SGNTASSSSPTLQFRPTSR), 274 to 285 (DSITNTVSNASS), and 308 to 319 (SHFSSTDSNTDS). The segment covering 337-349 (KSSETLKNPRNDD) has biased composition (basic and acidic residues). Ser-393 bears the Phosphoserine mark. Sel1-like repeat units lie at residues 638-674 (PEALFLIGQFHSQGVLGFRRDLGKAFELYSLAAKKGH), 675-710 (PLSNYRVAVCLQTGTGVKPDTSKCVAIYKKAAEMDV), 711-747 (VEAMFRIALIYLNGLLGQKRNISLGVQWLERACKSKG), 751-788 (VRAMYELAKIYEQPDRYGVSATPERKFELYKQSAVYGY), 789-825 (AAAQCKLGECYEHGLLGCLAEPRRSIFWYTRAAEQDY), 826-863 (GEAELGLSGWYLTGSEGILPKNGEEALLWAHKAACKGL), and 864-899 (AKAQYAVGFMMEQGIGVAADPSSAHNWYIRAAKQGF). The interval 905-932 (RLEEQALSSKQTHSKAPKKKQQEQCVVM) is disordered.

This chain is Chitin synthase regulatory factor 3 (chr3), found in Schizosaccharomyces pombe (strain 972 / ATCC 24843) (Fission yeast).